Consider the following 345-residue polypeptide: NADPH dehydrogenase (345 aa).

FMN is bound at residue 23–26; the sequence is SPMC. Tyr-28 provides a ligand contact to substrate. Ala-60 and Gln-102 together coordinate FMN. 164 to 167 contacts substrate; the sequence is HGAH. FMN-binding positions include Arg-215 and 307 to 308; that span reads GR.

It belongs to the NADH:flavin oxidoreductase/NADH oxidase family. NamA subfamily. Homotetramer. FMN serves as cofactor.

It carries out the reaction A + NADPH + H(+) = AH2 + NADP(+). Its function is as follows. Catalyzes the reduction of the double bond of an array of alpha,beta-unsaturated aldehydes and ketones. It also reduces the nitro group of nitroester and nitroaromatic compounds. It could have a role in detoxification processes. The protein is NADPH dehydrogenase of Bacillus cereus (strain ATCC 14579 / DSM 31 / CCUG 7414 / JCM 2152 / NBRC 15305 / NCIMB 9373 / NCTC 2599 / NRRL B-3711).